The primary structure comprises 227 residues: Cytochrome c oxidase subunit 2 (227 aa).

Topologically, residues 1 to 14 are mitochondrial intermembrane; the sequence is MAYPFQLGFQDATS. The helical transmembrane segment at 15–45 threads the bilayer; sequence PIMEELLHFHDHTLMIVFLISSLVLYVISAM. Topologically, residues 46-59 are mitochondrial matrix; the sequence is LTTNLTHTSTMDAQ. The helical transmembrane segment at 60 to 87 threads the bilayer; that stretch reads EVETIWTILPAIILITIALPSLRILYMM. At 88-227 the chain is on the mitochondrial intermembrane side; that stretch reads DEINNPAMTI…YFEKWSVSML (140 aa). Cu cation is bound by residues His-161, Cys-196, Glu-198, Cys-200, His-204, and Met-207. Residue Glu-198 participates in Mg(2+) binding. At Tyr-218 the chain carries Phosphotyrosine.

This sequence belongs to the cytochrome c oxidase subunit 2 family. As to quaternary structure, component of the cytochrome c oxidase (complex IV, CIV), a multisubunit enzyme composed of 14 subunits. The complex is composed of a catalytic core of 3 subunits MT-CO1, MT-CO2 and MT-CO3, encoded in the mitochondrial DNA, and 11 supernumerary subunits COX4I, COX5A, COX5B, COX6A, COX6B, COX6C, COX7A, COX7B, COX7C, COX8 and NDUFA4, which are encoded in the nuclear genome. The complex exists as a monomer or a dimer and forms supercomplexes (SCs) in the inner mitochondrial membrane with NADH-ubiquinone oxidoreductase (complex I, CI) and ubiquinol-cytochrome c oxidoreductase (cytochrome b-c1 complex, complex III, CIII), resulting in different assemblies (supercomplex SCI(1)III(2)IV(1) and megacomplex MCI(2)III(2)IV(2)). Found in a complex with TMEM177, COA6, COX18, COX20, SCO1 and SCO2. Interacts with TMEM177 in a COX20-dependent manner. Interacts with COX20. Interacts with COX16. It depends on Cu cation as a cofactor.

The protein localises to the mitochondrion inner membrane. It catalyses the reaction 4 Fe(II)-[cytochrome c] + O2 + 8 H(+)(in) = 4 Fe(III)-[cytochrome c] + 2 H2O + 4 H(+)(out). Functionally, component of the cytochrome c oxidase, the last enzyme in the mitochondrial electron transport chain which drives oxidative phosphorylation. The respiratory chain contains 3 multisubunit complexes succinate dehydrogenase (complex II, CII), ubiquinol-cytochrome c oxidoreductase (cytochrome b-c1 complex, complex III, CIII) and cytochrome c oxidase (complex IV, CIV), that cooperate to transfer electrons derived from NADH and succinate to molecular oxygen, creating an electrochemical gradient over the inner membrane that drives transmembrane transport and the ATP synthase. Cytochrome c oxidase is the component of the respiratory chain that catalyzes the reduction of oxygen to water. Electrons originating from reduced cytochrome c in the intermembrane space (IMS) are transferred via the dinuclear copper A center (CU(A)) of subunit 2 and heme A of subunit 1 to the active site in subunit 1, a binuclear center (BNC) formed by heme A3 and copper B (CU(B)). The BNC reduces molecular oxygen to 2 water molecules using 4 electrons from cytochrome c in the IMS and 4 protons from the mitochondrial matrix. This Macrotus californicus (Californian leaf-nosed bat) protein is Cytochrome c oxidase subunit 2 (MT-CO2).